A 323-amino-acid polypeptide reads, in one-letter code: 4-hydroxy-3-methylbut-2-enyl diphosphate reductase (323 aa).

Residue Cys-21 coordinates [4Fe-4S] cluster. (2E)-4-hydroxy-3-methylbut-2-enyl diphosphate contacts are provided by His-50 and His-83. Dimethylallyl diphosphate is bound by residues His-50 and His-83. Residues His-50 and His-83 each contribute to the isopentenyl diphosphate site. Cys-105 is a binding site for [4Fe-4S] cluster. A (2E)-4-hydroxy-3-methylbut-2-enyl diphosphate-binding site is contributed by His-133. His-133 serves as a coordination point for dimethylallyl diphosphate. Residue His-133 coordinates isopentenyl diphosphate. The active-site Proton donor is the Glu-135. Thr-173 contacts (2E)-4-hydroxy-3-methylbut-2-enyl diphosphate. Residue Cys-203 participates in [4Fe-4S] cluster binding. The (2E)-4-hydroxy-3-methylbut-2-enyl diphosphate site is built by Ser-231, Ser-232, Asn-233, and Ser-276. Positions 231, 232, 233, and 276 each coordinate dimethylallyl diphosphate. Ser-231, Ser-232, Asn-233, and Ser-276 together coordinate isopentenyl diphosphate.

This sequence belongs to the IspH family. [4Fe-4S] cluster serves as cofactor.

The enzyme catalyses isopentenyl diphosphate + 2 oxidized [2Fe-2S]-[ferredoxin] + H2O = (2E)-4-hydroxy-3-methylbut-2-enyl diphosphate + 2 reduced [2Fe-2S]-[ferredoxin] + 2 H(+). The catalysed reaction is dimethylallyl diphosphate + 2 oxidized [2Fe-2S]-[ferredoxin] + H2O = (2E)-4-hydroxy-3-methylbut-2-enyl diphosphate + 2 reduced [2Fe-2S]-[ferredoxin] + 2 H(+). It functions in the pathway isoprenoid biosynthesis; dimethylallyl diphosphate biosynthesis; dimethylallyl diphosphate from (2E)-4-hydroxy-3-methylbutenyl diphosphate: step 1/1. Its pathway is isoprenoid biosynthesis; isopentenyl diphosphate biosynthesis via DXP pathway; isopentenyl diphosphate from 1-deoxy-D-xylulose 5-phosphate: step 6/6. Its function is as follows. Catalyzes the conversion of 1-hydroxy-2-methyl-2-(E)-butenyl 4-diphosphate (HMBPP) into a mixture of isopentenyl diphosphate (IPP) and dimethylallyl diphosphate (DMAPP). Acts in the terminal step of the DOXP/MEP pathway for isoprenoid precursor biosynthesis. The polypeptide is 4-hydroxy-3-methylbut-2-enyl diphosphate reductase (Cutibacterium acnes (strain DSM 16379 / KPA171202) (Propionibacterium acnes)).